Consider the following 1426-residue polypeptide: Homeobox protein cut-like 2 (1426 aa).

The segment at 77–104 is disordered; it reads PEPPSAREQNEGTCPTGHTPANGNHLPG. The residue at position 81 (S81) is a Phosphoserine. Residues 131 to 311 adopt a coiled-coil conformation; the sequence is ITLAARLGEA…IKTELSILRA (181 aa). Disordered stretches follow at residues 351–419, 460–488, 599–628, 653–676, 743–769, and 904–977; these read ALLA…FPSL, KPPS…GPEE, EIES…STSE, ESGP…TASQ, YASV…PRGD, and LGQG…SSSQ. Over residues 374 to 395 the composition is skewed to pro residues; sequence PPYPPQLPPPPGPEDPLSPSPA. 2 stretches are compositionally biased toward low complexity: residues 397-408 and 460-470; these read PLLGPSLGPDGP and KPPSAPAASVP. Positions 482–569 form a DNA-binding region, CUT 1; it reads DGAGPEEEQL…VLALRTIQVR (88 aa). Residues 587-655 are a coiled coil; the sequence is DAIKSILEQA…QQALLEMESG (69 aa). The segment covering 608–628 has biased composition (polar residues); the sequence is SKNSPASVSIPNGTASSSTSE. Composition is skewed to low complexity over residues 743–757, 910–928, and 965–976; these read YASV…SSYS, QAPT…EPTS, and SSSLGGKPFSSS. Positions 828 to 915 form a DNA-binding region, CUT 2; sequence QYELYMYREV…QGQGQAPTQQ (88 aa). The CUT 3 DNA-binding region spans 983–1070; that stretch reads QEMVAMSPEL…VEKLRDMKKL (88 aa). Residues 1113 to 1172 constitute a DNA-binding region (homeobox); that stretch reads AKKPRVVLAPAEKEALRKAYQLEPYPSQQTIELLSFQLNLKTNTVINWFHNYRSRMRREM. The tract at residues 1177 to 1392 is disordered; it reads TQDDPDFDPS…AALHPSTKVN (216 aa). 2 stretches are compositionally biased toward basic and acidic residues: residues 1233–1245 and 1260–1274; these read APDR…KQEE and DPDR…EHTH. A compositionally biased stretch (low complexity) spans 1318–1332; the sequence is LSFKSTSESSCCSLE. Residues 1338–1350 show a composition bias toward polar residues; that stretch reads PSVISSPDLTTCV. Over residues 1351-1364 the composition is skewed to low complexity; it reads SPAPSSSAPISPSL.

Belongs to the CUT homeobox family. As to expression, restricted to neural tissues. Expressed exclusively in the central and peripheral nervous systems.

It is found in the nucleus. Its function is as follows. Transcription factor involved in the control of neuronal proliferation and differentiation in the brain. Regulates dendrite development and branching, dendritic spine formation, and synaptogenesis in cortical layers II-III. Binds to DNA in a sequence-specific manner. This Mus musculus (Mouse) protein is Homeobox protein cut-like 2 (Cux2).